The following is a 207-amino-acid chain: Protein Nef (207 aa).

A lipid anchor (N-myristoyl glycine; by host) is attached at G2. Phosphoserine; by host is present on S6. The acidic; interacts with host PACS1 and PACS2; stabilizes the interaction of NEF/MHC-I with host AP1M1; necessary for MHC-I internalization stretch occupies residues 63 to 66 (EEZE). The SH3-binding; interaction with Src family tyrosine kinases stretch occupies residues 70–79 (PVRPQVPLRP). Positions 73 to 76 (PQVP) match the PxxP; stabilizes the interaction of NEF/MHC-I with host AP1M1; necessary for MHC-I internalization motif. Residues 109 to 125 (EILDLWVYHTQGFFPDW) form a mediates dimerization, Nef-PTE1 interaction region. The segment at 149-181 (LSEEAVEEANEGDNNALLHPICQHGVDDDHKQV) is binding to ATP6V1H. The Dileucine internalization motif; necessary for CD4 internalization signature appears at 165-166 (LL). A Diacidic; necessary for CD4 internalization motif is present at residues 175-176 (DD).

The protein belongs to the lentivirus primate group Nef protein family. In terms of assembly, monomer; cytosolic form. Homodimer; membrane bound form. Interacts with Nef associated p21-activated kinase (PAK2); this interaction activates PAK2. Associates with the Nef-MHC-I-AP1 complex; this complex is required for MHC-I internalization. Interacts (via C-terminus) with host PI3-kinase. Interacts with host PACS1; this interaction seems to be weak. Interacts with host PACS2. Interacts with host LCK and MAPK3; these interactions inhibit the kinase activity of the latter. Interacts with host ATP6V1H; this interaction may play a role in CD4 endocytosis. Associates with the CD4-Nef-AP2 complex; this complex is required for CD4 internalization. Interacts with host AP2 subunit alpha and AP2 subunit sigma2. Interacts with TCR-zeta chain; this interaction up-regulates the Fas ligand (FasL) surface expression. Interacts with host HCK, LYN, and SRC; these interactions activate the Src family kinases. Interacts with MAP3K5; this interaction inhibits the Fas and TNFR-mediated death signals. Interacts with beta-COP and PTE1. Interacts with human RACK1; this increases Nef phosphorylation by PKC. Interacts with TP53; this interaction decreases the half-life of TP53, protecting the infected cell against p53-mediated apoptosis. Post-translationally, the virion-associated Nef proteins are cleaved by the viral protease to release the soluble C-terminal core protein. Nef is probably cleaved concomitantly with viral structural proteins on maturation of virus particles. Myristoylated. In terms of processing, phosphorylated on serine residues, probably by host PKCdelta and theta.

Its subcellular location is the host cell membrane. It localises to the virion. It is found in the secreted. The protein localises to the host Golgi apparatus membrane. Its function is as follows. Factor of infectivity and pathogenicity, required for optimal virus replication. Alters numerous pathways of T-lymphocyte function and down-regulates immunity surface molecules in order to evade host defense and increase viral infectivity. Alters the functionality of other immunity cells, like dendritic cells, monocytes/macrophages and NK cells. Functionally, in infected CD4(+) T-lymphocytes, down-regulates the surface MHC-I, mature MHC-II, CD4, CD28, CCR5 and CXCR4 molecules. Mediates internalization and degradation of host CD4 through the interaction of with the cytoplasmic tail of CD4, the recruitment of AP-2 (clathrin adapter protein complex 2), internalization through clathrin coated pits, and subsequent transport to endosomes and lysosomes for degradation. Diverts host MHC-I molecules to the trans-Golgi network-associated endosomal compartments by an endocytic pathway to finally target them for degradation. MHC-I down-regulation may involve AP-1 (clathrin adapter protein complex 1) or possibly Src family kinase-ZAP70/Syk-PI3K cascade recruited by PACS2. In consequence infected cells are masked for immune recognition by cytotoxic T-lymphocytes. Decreasing the number of immune receptors also prevents reinfection by more HIV particles (superinfection). Down-regulates host SERINC3 and SERINC5 thereby excluding these proteins from the viral particles. Virion infectivity is drastically higher when SERINC3 or SERINC5 are excluded from the viral envelope, because these host antiviral proteins impair the membrane fusion event necessary for subsequent virion penetration. Bypasses host T-cell signaling by inducing a transcriptional program nearly identical to that of anti-CD3 cell activation. Interaction with TCR-zeta chain up-regulates the Fas ligand (FasL). Increasing surface FasL molecules and decreasing surface MHC-I molecules on infected CD4(+) cells send attacking cytotoxic CD8+ T-lymphocytes into apoptosis. In terms of biological role, plays a role in optimizing the host cell environment for viral replication without causing cell death by apoptosis. Protects the infected cells from apoptosis in order to keep them alive until the next virus generation is ready to strike. Inhibits the Fas and TNFR-mediated death signals by blocking MAP3K5/ASK1. Decreases the half-life of TP53, protecting the infected cell against p53-mediated apoptosis. Inhibits the apoptotic signals regulated by the Bcl-2 family proteins through the formation of a Nef/PI3-kinase/PAK2 complex that leads to activation of PAK2 and induces phosphorylation of host BAD. Its function is as follows. Extracellular Nef protein targets CD4(+) T-lymphocytes for apoptosis by interacting with CXCR4 surface receptors. The chain is Protein Nef from Homo sapiens (Human).